We begin with the raw amino-acid sequence, 331 residues long: Fructose-1,6-bisphosphatase class 1 2 (331 aa).

Mg(2+) is bound by residues E80, D98, L100, and D101. Substrate-binding positions include 101-104 (DGSS) and N189. Mg(2+) is bound at residue E261.

The protein belongs to the FBPase class 1 family. As to quaternary structure, homotetramer. It depends on Mg(2+) as a cofactor.

It localises to the cytoplasm. It carries out the reaction beta-D-fructose 1,6-bisphosphate + H2O = beta-D-fructose 6-phosphate + phosphate. Its pathway is carbohydrate biosynthesis; Calvin cycle. In Cereibacter sphaeroides (strain ATCC 17023 / DSM 158 / JCM 6121 / CCUG 31486 / LMG 2827 / NBRC 12203 / NCIMB 8253 / ATH 2.4.1.) (Rhodobacter sphaeroides), this protein is Fructose-1,6-bisphosphatase class 1 2.